Reading from the N-terminus, the 151-residue chain is Probable cGMP 3',5'-cyclic phosphodiesterase subunit delta (151 aa).

The protein belongs to the PDE6D/unc-119 family. In terms of assembly, interacts with Pde6.

The protein localises to the nucleus. The protein resides in the cytoplasm. The chain is Probable cGMP 3',5'-cyclic phosphodiesterase subunit delta from Culex quinquefasciatus (Southern house mosquito).